The chain runs to 263 residues: Small ribosomal subunit protein uS3 (263 aa).

Residues 39-107 (VREYLKKKLK…PVHVNIEEIR (69 aa)) enclose the KH type-2 domain. The segment at 211–263 (GELPPEAATPREEERRPRRAPRGDRPDGARTGRPGGRGRGPRKADAAPAPEGE) is disordered. Over residues 219–240 (TPREEERRPRRAPRGDRPDGAR) the composition is skewed to basic and acidic residues.

The protein belongs to the universal ribosomal protein uS3 family. In terms of assembly, part of the 30S ribosomal subunit. Forms a tight complex with proteins S10 and S14.

Functionally, binds the lower part of the 30S subunit head. Binds mRNA in the 70S ribosome, positioning it for translation. The protein is Small ribosomal subunit protein uS3 of Bordetella pertussis (strain Tohama I / ATCC BAA-589 / NCTC 13251).